Reading from the N-terminus, the 204-residue chain is Phosphopantothenoylcysteine decarboxylase (204 aa).

FMN-binding positions include Thr53 and 104–107; that span reads DANT. Position 140 (Asn140) interacts with substrate. Cys173 (proton donor) is an active-site residue.

This sequence belongs to the HFCD (homooligomeric flavin containing Cys decarboxylase) superfamily. In terms of assembly, homotrimer. It depends on FMN as a cofactor.

It catalyses the reaction N-[(R)-4-phosphopantothenoyl]-L-cysteine + H(+) = (R)-4'-phosphopantetheine + CO2. Its pathway is cofactor biosynthesis; coenzyme A biosynthesis; CoA from (R)-pantothenate: step 3/5. Catalyzes the decarboxylation of the cysteine moiety of 4-phosphopantothenoylcysteine to form 4'-phosphopantotheine and this reaction forms part of the biosynthesis of coenzyme A. This chain is Phosphopantothenoylcysteine decarboxylase (Ppcdc), found in Mus musculus (Mouse).